Here is a 238-residue protein sequence, read N- to C-terminus: 1-(5-phosphoribosyl)-5-[(5-phosphoribosylamino)methylideneamino] imidazole-4-carboxamide isomerase (238 aa).

D8 serves as the catalytic Proton acceptor. D129 (proton donor) is an active-site residue.

This sequence belongs to the HisA/HisF family.

It is found in the cytoplasm. It carries out the reaction 1-(5-phospho-beta-D-ribosyl)-5-[(5-phospho-beta-D-ribosylamino)methylideneamino]imidazole-4-carboxamide = 5-[(5-phospho-1-deoxy-D-ribulos-1-ylimino)methylamino]-1-(5-phospho-beta-D-ribosyl)imidazole-4-carboxamide. It functions in the pathway amino-acid biosynthesis; L-histidine biosynthesis; L-histidine from 5-phospho-alpha-D-ribose 1-diphosphate: step 4/9. In Clostridium novyi (strain NT), this protein is 1-(5-phosphoribosyl)-5-[(5-phosphoribosylamino)methylideneamino] imidazole-4-carboxamide isomerase.